The chain runs to 907 residues: Protein translocase subunit SecA (907 aa).

ATP is bound by residues Gln87, 105–109, and Asp511; that span reads GEGKT. Zn(2+) contacts are provided by Cys891, Cys893, Cys902, and His903.

The protein belongs to the SecA family. As to quaternary structure, monomer and homodimer. Part of the essential Sec protein translocation apparatus which comprises SecA, SecYEG and auxiliary proteins SecDF-YajC and YidC. The cofactor is Zn(2+).

The protein localises to the cell inner membrane. The protein resides in the cytoplasm. The enzyme catalyses ATP + H2O + cellular proteinSide 1 = ADP + phosphate + cellular proteinSide 2.. Part of the Sec protein translocase complex. Interacts with the SecYEG preprotein conducting channel. Has a central role in coupling the hydrolysis of ATP to the transfer of proteins into and across the cell membrane, serving both as a receptor for the preprotein-SecB complex and as an ATP-driven molecular motor driving the stepwise translocation of polypeptide chains across the membrane. The chain is Protein translocase subunit SecA from Aromatoleum aromaticum (strain DSM 19018 / LMG 30748 / EbN1) (Azoarcus sp. (strain EbN1)).